Consider the following 148-residue polypeptide: Large-conductance mechanosensitive channel (148 aa).

The next 2 helical transmembrane spans lie at 9 to 29 (AFAVKGNVVDMAVGIIIGAAF) and 79 to 99 (IQTVIDFIIVAFAIFMGVKAI).

It belongs to the MscL family. As to quaternary structure, homopentamer.

The protein resides in the cell inner membrane. Channel that opens in response to stretch forces in the membrane lipid bilayer. May participate in the regulation of osmotic pressure changes within the cell. This is Large-conductance mechanosensitive channel from Pseudomonas savastanoi pv. phaseolicola (strain 1448A / Race 6) (Pseudomonas syringae pv. phaseolicola (strain 1448A / Race 6)).